The sequence spans 77 residues: Acyl carrier protein (77 aa).

Residues 2–77 form the Carrier domain; the sequence is SSIEERVNKI…SAVDYIKAHS (76 aa). Serine 37 carries the O-(pantetheine 4'-phosphoryl)serine modification.

This sequence belongs to the acyl carrier protein (ACP) family. 4'-phosphopantetheine is transferred from CoA to a specific serine of apo-ACP by AcpS. This modification is essential for activity because fatty acids are bound in thioester linkage to the sulfhydryl of the prosthetic group.

The protein localises to the cytoplasm. It functions in the pathway lipid metabolism; fatty acid biosynthesis. Carrier of the growing fatty acid chain in fatty acid biosynthesis. The sequence is that of Acyl carrier protein from Alcanivorax borkumensis (strain ATCC 700651 / DSM 11573 / NCIMB 13689 / SK2).